Consider the following 238-residue polypeptide: Ribonuclease 3 (238 aa).

One can recognise an RNase III domain in the interval 4 to 127; sequence IEEFEKRLGY…TMGAIYLETG (124 aa). E40 lines the Mg(2+) pocket. The active site involves D44. Mg(2+)-binding residues include N113 and E116. E116 is an active-site residue. One can recognise a DRBM domain in the interval 154–223; that stretch reads DYKTALQELT…ARIALEIFHR (70 aa).

The protein belongs to the ribonuclease III family. Homodimer. Mg(2+) serves as cofactor.

It localises to the cytoplasm. It catalyses the reaction Endonucleolytic cleavage to 5'-phosphomonoester.. Digests double-stranded RNA. Involved in the processing of primary rRNA transcript to yield the immediate precursors to the large and small rRNAs (23S and 16S). Processes some mRNAs, and tRNAs when they are encoded in the rRNA operon. Processes pre-crRNA and tracrRNA of type II CRISPR loci if present in the organism. The polypeptide is Ribonuclease 3 (Wolinella succinogenes (strain ATCC 29543 / DSM 1740 / CCUG 13145 / JCM 31913 / LMG 7466 / NCTC 11488 / FDC 602W) (Vibrio succinogenes)).